The primary structure comprises 482 residues: Probable glycine dehydrogenase (decarboxylating) subunit 2 (482 aa).

Position 269 is an N6-(pyridoxal phosphate)lysine (lysine 269).

This sequence belongs to the GcvP family. C-terminal subunit subfamily. The glycine cleavage system is composed of four proteins: P, T, L and H. In this organism, the P 'protein' is a heterodimer of two subunits. It depends on pyridoxal 5'-phosphate as a cofactor.

The enzyme catalyses N(6)-[(R)-lipoyl]-L-lysyl-[glycine-cleavage complex H protein] + glycine + H(+) = N(6)-[(R)-S(8)-aminomethyldihydrolipoyl]-L-lysyl-[glycine-cleavage complex H protein] + CO2. Functionally, the glycine cleavage system catalyzes the degradation of glycine. The P protein binds the alpha-amino group of glycine through its pyridoxal phosphate cofactor; CO(2) is released and the remaining methylamine moiety is then transferred to the lipoamide cofactor of the H protein. The sequence is that of Probable glycine dehydrogenase (decarboxylating) subunit 2 from Pelodictyon phaeoclathratiforme (strain DSM 5477 / BU-1).